Reading from the N-terminus, the 218-residue chain is ER lumen protein-retaining receptor (218 aa).

Residues 1–2 (MN) are Lumenal-facing. The helical transmembrane segment at 3–23 (LFSFLGDMLHLGSMLILLFKI) threads the bilayer. Over 24-57 (KNDKSCAGVSLKSQILFTIVFTARYLDLFTNYVS) the chain is Cytoplasmic. The chain crosses the membrane as a helical span at residues 58-78 (LYITFMKITYIAVSYYTLHLI). Topologically, residues 79–94 (ARKYKFTYDKDHDTFK) are lumenal. The helical transmembrane segment at 95-115 (IVYLIASCAILSLITYDKTTI) threads the bilayer. At 116–123 (GIYSTFLE) the chain is on the cytoplasmic side. The helical transmembrane segment at 124–144 (ILWTFSIYLESIAILPQLILL) threads the bilayer. The Lumenal portion of the chain corresponds to 145–152 (QRTGEVEA). Residues 153-173 (LTSNYIVLLGGYRAFYLFNWI) form a helical membrane-spanning segment. The Cytoplasmic portion of the chain corresponds to 174–184 (YRITFYNWSGK). Residues 185 to 205 (IEMLSGLLQTILYADFFYYYA) traverse the membrane as a helical segment. Topologically, residues 206–218 (KSRMYGKKLVLPQ) are lumenal.

Belongs to the ERD2 family.

The protein localises to the endoplasmic reticulum membrane. Required for the retention of luminal endoplasmic reticulum proteins. Determines the specificity of the luminal ER protein retention system. Also required for normal vesicular traffic through the Golgi. The chain is ER lumen protein-retaining receptor (kdelr) from Dictyostelium discoideum (Social amoeba).